A 99-amino-acid polypeptide reads, in one-letter code: Large ribosomal subunit protein uL23 (99 aa).

Belongs to the universal ribosomal protein uL23 family. In terms of assembly, part of the 50S ribosomal subunit. Contacts protein L29, and trigger factor when it is bound to the ribosome.

One of the early assembly proteins it binds 23S rRNA. One of the proteins that surrounds the polypeptide exit tunnel on the outside of the ribosome. Forms the main docking site for trigger factor binding to the ribosome. The polypeptide is Large ribosomal subunit protein uL23 (Alkalilimnicola ehrlichii (strain ATCC BAA-1101 / DSM 17681 / MLHE-1)).